We begin with the raw amino-acid sequence, 435 residues long: Adenylosuccinate synthetase (435 aa).

GTP is bound by residues 11–17 (GDEGKGK) and 39–41 (GHT). Asp-12 serves as the catalytic Proton acceptor. Residues Asp-12 and Gly-39 each contribute to the Mg(2+) site. IMP is bound by residues 12–15 (DEGK), 37–40 (NAGH), Thr-128, Arg-142, Gln-223, Thr-238, and Arg-302. His-40 serves as the catalytic Proton donor. Residue 298–304 (SVTGRPR) coordinates substrate. GTP-binding positions include Arg-304, 330–332 (KLD), and 412–414 (STG).

It belongs to the adenylosuccinate synthetase family. In terms of assembly, homodimer. Mg(2+) serves as cofactor.

Its subcellular location is the cytoplasm. The catalysed reaction is IMP + L-aspartate + GTP = N(6)-(1,2-dicarboxyethyl)-AMP + GDP + phosphate + 2 H(+). Its pathway is purine metabolism; AMP biosynthesis via de novo pathway; AMP from IMP: step 1/2. Functionally, plays an important role in the de novo pathway of purine nucleotide biosynthesis. Catalyzes the first committed step in the biosynthesis of AMP from IMP. The polypeptide is Adenylosuccinate synthetase (Coxiella burnetii (strain Dugway 5J108-111)).